The primary structure comprises 160 residues: Cytochrome b6-f complex subunit 4 (160 aa).

Helical transmembrane passes span 36-56 (LLYM…GLSV), 95-115 (LLGV…PFIE), and 131-151 (ILFL…TFPI).

This sequence belongs to the cytochrome b family. PetD subfamily. As to quaternary structure, the 4 large subunits of the cytochrome b6-f complex are cytochrome b6, subunit IV (17 kDa polypeptide, petD), cytochrome f and the Rieske protein, while the 4 small subunits are petG, petL, petM and petN. The complex functions as a dimer. The N-terminus is blocked.

Its subcellular location is the plastid. The protein resides in the chloroplast thylakoid membrane. Functionally, component of the cytochrome b6-f complex, which mediates electron transfer between photosystem II (PSII) and photosystem I (PSI), cyclic electron flow around PSI, and state transitions. This chain is Cytochrome b6-f complex subunit 4, found in Chlamydomonas reinhardtii (Chlamydomonas smithii).